A 233-amino-acid polypeptide reads, in one-letter code: MSKKITKNRQKINELIKDVENKIYSLDEAIEMAKKTSFVKFDASIDISLKLNLDTRKADQQLRGSVSLPNGTGKIIRVLATSDEKEQLDLAKKAGANIVANKSDLEEILKSEKFDFDIMVTDPKMMPTLGKYGKVLGPKGLMPNPKTGTVTPNIAKAVEEIKKGKANYRADKGGIINSSIGKVSMGTTSLVENAKVLIDTIRKLKPATVKGIYMQNLTISTTMGPSFKIKIEN.

This sequence belongs to the universal ribosomal protein uL1 family. In terms of assembly, part of the 50S ribosomal subunit.

Its function is as follows. Binds directly to 23S rRNA. The L1 stalk is quite mobile in the ribosome, and is involved in E site tRNA release. Functionally, protein L1 is also a translational repressor protein, it controls the translation of the L11 operon by binding to its mRNA. In Mycoplasma mobile (strain ATCC 43663 / 163K / NCTC 11711) (Mesomycoplasma mobile), this protein is Large ribosomal subunit protein uL1.